The chain runs to 358 residues: Fructose-bisphosphate aldolase 6, cytosolic (358 aa).

An N-acetylserine modification is found at S2. R39 is a substrate binding site. Position 68 is an S-glutathionyl cysteine; transient (C68). Position 173 is an S-glutathionyl cysteine; transient; alternate (C173). C173 bears the S-nitrosocysteine; transient; alternate mark. Residue E183 is the Proton acceptor of the active site. Catalysis depends on K225, which acts as the Schiff-base intermediate with dihydroxyacetone-P. Substrate is bound by residues 266-268 (SGG) and R298. The residue at position 350 (S350) is a Phosphoserine. An N6,N6,N6-trimethyllysine modification is found at K354.

It belongs to the class I fructose-bisphosphate aldolase family. In terms of assembly, homotetramer. Interacts with TRX1 and TRX3. Interacts with GAPC1 and VDAC3. S-glutathionylated at Cys-68 and Cys-173. In terms of processing, S-nitrosylated at Cys-173. Expressed in roots, rosettes leaves, cauline leaves, stems and flowers.

It is found in the cytoplasm. Its subcellular location is the cytosol. The protein localises to the nucleus. The protein resides in the mitochondrion. The catalysed reaction is beta-D-fructose 1,6-bisphosphate = D-glyceraldehyde 3-phosphate + dihydroxyacetone phosphate. It participates in carbohydrate degradation; glycolysis; D-glyceraldehyde 3-phosphate and glycerone phosphate from D-glucose: step 4/4. Total and irreversible inhibition by S-nitrosoglutathione (GSNO). Partial and reversible inhibition by oxidized glutathione (GSSG). In terms of biological role, fructose-bisphosphate aldolase that plays a key role in glycolysis and gluconeogenesis. Associates with GAPC1 to the outer mitochondrial membrane, in a redox-dependent manner, leading to binding and bundling of actin. Actin binding and bundling occurs under oxidizing conditions and is reversible under reducing conditions. May be part of a redox-dependent retrograde signal transduction network for adaptation upon oxidative stress. The polypeptide is Fructose-bisphosphate aldolase 6, cytosolic (Arabidopsis thaliana (Mouse-ear cress)).